Consider the following 334-residue polypeptide: Procathepsin L (334 aa).

Residues 1–17 form the signal peptide; the sequence is MTPLLLLAVLCLGTALA. A propeptide spans 18 to 113 (activation peptide); it reads TPKFDQTFNA…RLFQEPLMLQ (96 aa). E122 contacts Zn(2+). Disulfide bonds link C135/C178 and C169/C211. C138 is a catalytic residue. Residues E163, D184, E199, E205, D227, D250, H253, D273, and D275 each contribute to the Zn(2+) site. C269 and C322 are joined by a disulfide. H276 is an active-site residue. Positions 289-290 are excised as a propeptide; that stretch reads DS. The active site involves N300.

It belongs to the peptidase C1 family. In terms of assembly, dimer of a heavy and a light chain linked by disulfide bonds. Interacts with Long isoform of CD74/Ii chain; the interaction stabilizes the conformation of mature CTSL. In terms of processing, during export along the endocytic pathway, pro-CTSL undergoes several proteolytic cleavages to generate the CTSL single-chain and two-chain mature forms, composed of a heavy chain linked to a light chain by disulfide bonds. Autocleavage; produces the single-chain CTSL after cleavage of the propeptide. The cleavage can be intermolecular. As to expression, both mature cathepsin L1 and procathepsin L are found in the upper epidermis. The lower epidermis predominantly contains procathepsin L. In seminiferous tubules expression is greater at stages VI-VII than at stages IX-XII.

It localises to the lysosome. Its subcellular location is the apical cell membrane. It is found in the cytoplasmic vesicle. The protein localises to the secretory vesicle. The protein resides in the chromaffin granule. It localises to the secreted. Its subcellular location is the extracellular space. It catalyses the reaction Specificity close to that of papain. As compared to cathepsin B, cathepsin L exhibits higher activity toward protein substrates, but has little activity on Z-Arg-Arg-NHMec, and no peptidyl-dipeptidase activity.. With respect to regulation, inhibited by the propeptide produced by autocleavage. Long isoform of CD74/Ii chain stabilizes the conformation of mature CTSL by binding to its active site and serving as a chaperone to help maintain a pool of mature enzyme in endocytic compartments and extracellular space of APCs. IFNG enhances the conversion into the CTSL mature and active form. Inhibited by CST6. Inhibited by the glycopeptide antibiotic teicoplanin. Inhibited by amantadine. In terms of biological role, thiol protease important for the overall degradation of proteins in lysosomes. Plays a critical for normal cellular functions such as general protein turnover, antigen processing and bone remodeling. Involved in the solubilization of cross-linked TG/thyroglobulin and in the subsequent release of thyroid hormone thyroxine (T4) by limited proteolysis of TG/thyroglobulin in the thyroid follicle lumen. In neuroendocrine chromaffin cells secretory vesicles, catalyzes the prohormone proenkephalin processing to the active enkephalin peptide neurotransmitter. In thymus, regulates CD4(+) T cell positive selection by generating the major histocompatibility complex class II (MHCII) bound peptide ligands presented by cortical thymic epithelial cells. Also mediates invariant chain processing in cortical thymic epithelial cells. Major elastin-degrading enzyme at neutral pH. Accumulates as a mature and active enzyme in the extracellular space of antigen presenting cells (APCs) to regulate degradation of the extracellular matrix in the course of inflammation. Secreted form generates endostatin from COL18A1. Critical for cardiac morphology and function. Plays an important role in hair follicle morphogenesis and cycling, as well as epidermal differentiation. Required for maximal stimulation of steroidogenesis by TIMP1. The protein is Procathepsin L of Rattus norvegicus (Rat).